A 25-amino-acid chain; its full sequence is Toxin LyeTx 1 (25 aa).

Leu-25 bears the Leucine amide mark.

Expressed by the venom gland.

It is found in the secreted. In terms of biological role, has antimicrobial activity against Gram-positive bacterium S.aureus (MIC=3.79 uM), Gram-negative bacterium E.coli (MIC=7.81 uM) and yeasts C.krusei (MIC=26.3 uM) and C.neoformans (MIC=13.2 uM). Has hemolytic activity against rabbit erythrocytes. Forms pores in lipid bilayers in vitro; pore formation is reduced when cholesterol is present in the bilayers. This Lycosa erythrognatha (Wolf spider) protein is Toxin LyeTx 1.